The primary structure comprises 210 residues: 2-dehydro-3-deoxy-phosphogluconate aldolase (210 aa).

Residue Glu41 is the Proton acceptor of the active site. Positions 45, 69, and 129 each coordinate pyruvate. The active-site Schiff-base intermediate with substrate is Lys129.

It belongs to the KHG/KDPG aldolase family. As to quaternary structure, homotrimer.

The protein localises to the cytoplasm. It carries out the reaction 2-dehydro-3-deoxy-6-phospho-D-gluconate = D-glyceraldehyde 3-phosphate + pyruvate. It participates in carbohydrate acid metabolism; 2-dehydro-3-deoxy-D-gluconate degradation; D-glyceraldehyde 3-phosphate and pyruvate from 2-dehydro-3-deoxy-D-gluconate: step 2/2. Catalyzes the reversible, stereospecific retro-aldol cleavage of 2-keto-3-deoxy-6-phosphogluconate (KDPG) to pyruvate and D-glyceraldehyde-3-phosphate. In Treponema pallidum (strain Nichols), this protein is 2-dehydro-3-deoxy-phosphogluconate aldolase (eda).